The sequence spans 697 residues: Colicin-D (697 aa).

The TonB box motif lies at 17 to 24; the sequence is HSMVVWPS.

This sequence belongs to the cloacin colicin family.

Colicins are polypeptide toxins produced by and active against E.coli and closely related bacteria. Its function is as follows. Colicin D inhibits protein synthesis. The polypeptide is Colicin-D (cda) (Escherichia coli).